Reading from the N-terminus, the 240-residue chain is MILLRHGESVWNLENRFTGWTDVDLSANGVEEARLAGKILKNEGYQFDKAYTSVLKRAIRTLWIVEEMMDLVWLPVEKRWELNERHYGNLQGLNKAEMAKQYGAELVHQWRRGYGIEPPPLDNSDPRHPRFDRRYAGLAPEALPASESLKKTLKRVIPCWKQHILPDIAAGKELIIVAHGNSLRALYKHLEGLSDQEVMELNIPTGIPLVFELDSAFRPTAHYYLADSEKSQVVIGDTAH.

Substrate contacts are provided by residues 5-12 (RHGESVWN), 18-19 (TG), R57, 84-87 (ERHY), K95, 111-112 (RR), and 180-181 (GN). Residue H6 is the Tele-phosphohistidine intermediate of the active site. E84 functions as the Proton donor/acceptor in the catalytic mechanism.

This sequence belongs to the phosphoglycerate mutase family. BPG-dependent PGAM subfamily. Homodimer.

It carries out the reaction (2R)-2-phosphoglycerate = (2R)-3-phosphoglycerate. The protein operates within carbohydrate degradation; glycolysis; pyruvate from D-glyceraldehyde 3-phosphate: step 3/5. Its function is as follows. Catalyzes the interconversion of 2-phosphoglycerate and 3-phosphoglycerate. In Nitrosococcus oceani (strain ATCC 19707 / BCRC 17464 / JCM 30415 / NCIMB 11848 / C-107), this protein is 2,3-bisphosphoglycerate-dependent phosphoglycerate mutase.